A 235-amino-acid polypeptide reads, in one-letter code: Small ribosomal subunit protein uS2c (235 aa).

The protein belongs to the universal ribosomal protein uS2 family.

Its subcellular location is the plastid. The protein localises to the chloroplast. This Zygnema circumcarinatum (Green alga) protein is Small ribosomal subunit protein uS2c (rps2).